The primary structure comprises 477 residues: Diphthine methyltransferase (477 aa).

WD repeat units follow at residues 194 to 232 (HFEA…TPVF), 236 to 276 (RHCM…QPLA), and 422 to 464 (VKTR…ARTL).

Belongs to the DPH7 family. As to quaternary structure, interacts with INCA1.

It carries out the reaction diphthine methyl ester-[translation elongation factor 2] + H2O = diphthine-[translation elongation factor 2] + methanol + H(+). The protein operates within protein modification; peptidyl-diphthamide biosynthesis. In terms of biological role, catalyzes the demethylation of diphthine methyl ester to form diphthine, an intermediate diphthamide biosynthesis, a post-translational modification of histidine which occurs in translation elongation factor 2 (EEF2). The sequence is that of Diphthine methyltransferase (Dph7) from Mus musculus (Mouse).